The sequence spans 316 residues: Glutathione synthetase (316 aa).

Residues 125–310 (KLFTAWFSDL…ITGMLMDAIE (186 aa)) enclose the ATP-grasp domain. Residue 151-207 (WEKHSDIILKPLDGMGGASIFRVKEGDPNLGVIAETLTEHGTRYCMAQNYLPAIKDG) coordinates ATP. Positions 281 and 283 each coordinate Mg(2+).

It belongs to the prokaryotic GSH synthase family. Requires Mg(2+) as cofactor. Mn(2+) is required as a cofactor.

It catalyses the reaction gamma-L-glutamyl-L-cysteine + glycine + ATP = glutathione + ADP + phosphate + H(+). Its pathway is sulfur metabolism; glutathione biosynthesis; glutathione from L-cysteine and L-glutamate: step 2/2. In Escherichia coli O6:H1 (strain CFT073 / ATCC 700928 / UPEC), this protein is Glutathione synthetase.